We begin with the raw amino-acid sequence, 407 residues long: Resuscitation-promoting factor RpfA (407 aa).

Positions 1 to 33 (MSGRHRKPTTSNVSVAKIAFTGAVLGGGGIAMA) are cleaved as a signal peptide. Disordered regions lie at residues 142 to 253 (VNGE…ADLA) and 271 to 371 (LPAA…AETP). Pro residues predominate over residues 148–159 (PLAPPPADPAPP). Residues 160 to 170 (VELAANDLPAP) are compositionally biased toward low complexity. Residues 171 to 193 (LGEPLPAAPADPAPPADLAPPAP) show a composition bias toward pro residues. Tandem repeats lie at residues 178 to 185 (APADPAPP) and 186 to 193 (ADLAPPAP). A 12 X 8 AA approximate repeats of A-P-A-D-L-A-P-P region spans residues 178-359 (APADPAPPAD…PDPQPADAPP (182 aa)). Positions 194-210 (ADVAPPVELAVNDLPAP) are enriched in low complexity. Over residues 211-249 (LGEPLPAAPADPAPPADLAPPAPADLAPPAPADLAPPAP) the composition is skewed to pro residues. A run of 10 repeats spans residues 218–225 (APADPAPP), 226–233 (ADLAPPAP), 240–247 (APADLAPP), 248–255 (APADLAPP), 274–281 (APAELAPP), 287–294 (ASADLAPP), 295–302 (APADLAPP), 303–310 (APAELAPP), 311–318 (APADLAPP), and 353–359 (QPADAPP). A compositionally biased stretch (low complexity) spans 274–292 (APAELAPPADLAPASADLA). Composition is skewed to pro residues over residues 293–312 (PPAP…PPAP) and 350–361 (PDPQPADAPPPG).

The protein belongs to the transglycosylase family. Rpf subfamily.

Its function is as follows. Factor that stimulates resuscitation of dormant cells. Has peptidoglycan (PG) hydrolytic activity. The chain is Resuscitation-promoting factor RpfA (rpfA) from Mycobacterium tuberculosis (strain CDC 1551 / Oshkosh).